The following is a 430-amino-acid chain: Proteasome-activating nucleotidase (430 aa).

Residues 9-89 (TELKKEKKAF…LRRELDRMRV (81 aa)) are a coiled coil. ATP is bound by residues 214–219 (GTGKTL) and His-353. The interval 428–430 (LYR) is docks into pockets in the proteasome alpha-ring to cause gate opening.

It belongs to the AAA ATPase family. Homohexamer. The hexameric complex has a two-ring architecture resembling a top hat that caps the 20S proteasome core at one or both ends. Alone, can form a complex composed of two stacked hexameric rings in vitro. Upon ATP-binding, the C-terminus of PAN interacts with the alpha-rings of the proteasome core by binding to the intersubunit pockets.

It is found in the cytoplasm. ATPase activity is inhibited by EDTA, N-ethylmaleimide (NEM) and p-chloromercuriphenyl-sulfonic acid (PCMS) in vitro. Its function is as follows. ATPase which is responsible for recognizing, binding, unfolding and translocation of substrate proteins into the archaeal 20S proteasome core particle. Is essential for opening the gate of the 20S proteasome via an interaction with its C-terminus, thereby allowing substrate entry and access to the site of proteolysis. Thus, the C-termini of the proteasomal ATPase function like a 'key in a lock' to induce gate opening and therefore regulate proteolysis. Unfolding activity requires energy from ATP hydrolysis, whereas ATP binding alone promotes ATPase-20S proteasome association which triggers gate opening, and supports translocation of unfolded substrates. In addition to ATP, is able to cleave other nucleotide triphosphates such as CTP, GTP and UTP, but hydrolysis of these other nucleotides is less effective in promoting proteolysis than ATP. Moreover, PAN by itself can function as a chaperone in vitro. In Methanocaldococcus jannaschii (strain ATCC 43067 / DSM 2661 / JAL-1 / JCM 10045 / NBRC 100440) (Methanococcus jannaschii), this protein is Proteasome-activating nucleotidase.